The sequence spans 198 residues: Protein GrpE (198 aa).

The tract at residues M1–E32 is disordered.

The protein belongs to the GrpE family. As to quaternary structure, homodimer.

The protein localises to the cytoplasm. Participates actively in the response to hyperosmotic and heat shock by preventing the aggregation of stress-denatured proteins, in association with DnaK and GrpE. It is the nucleotide exchange factor for DnaK and may function as a thermosensor. Unfolded proteins bind initially to DnaJ; upon interaction with the DnaJ-bound protein, DnaK hydrolyzes its bound ATP, resulting in the formation of a stable complex. GrpE releases ADP from DnaK; ATP binding to DnaK triggers the release of the substrate protein, thus completing the reaction cycle. Several rounds of ATP-dependent interactions between DnaJ, DnaK and GrpE are required for fully efficient folding. The chain is Protein GrpE from Haemophilus ducreyi (strain 35000HP / ATCC 700724).